The following is a 175-amino-acid chain: Rubredoxin-1 (175 aa).

Rubredoxin-like domains lie at 1–53 (MARY…FVLI) and 119–170 (FLKW…YVLY). Fe cation contacts are provided by Cys6, Cys9, Cys39, Cys42, Cys124, Cys127, Cys157, and Cys160.

The protein belongs to the rubredoxin family. It depends on Fe(3+) as a cofactor.

It is found in the cytoplasm. It functions in the pathway hydrocarbon metabolism; alkane degradation. Involved in the hydrocarbon hydroxylating system, which transfers electrons from NADH to rubredoxin reductase and then through rubredoxin to alkane 1 monooxygenase. The chain is Rubredoxin-1 (alkG) from Pseudomonas putida (Arthrobacter siderocapsulatus).